The following is a 375-amino-acid chain: Growth/differentiation factor 8 (375 aa).

The signal sequence occupies residues 1–18 (MQKLQISVYIYLFMLIVA). Residues 19 to 266 (GPVDLNENSE…VTDTPKRSRR (248 aa)) constitute a propeptide that is removed on maturation. Asparagine 47 and asparagine 71 each carry an N-linked (GlcNAc...) asparagine glycan. 4 cysteine pairs are disulfide-bonded: cysteine 272/cysteine 282, cysteine 281/cysteine 340, cysteine 309/cysteine 372, and cysteine 313/cysteine 374.

It belongs to the TGF-beta family. As to quaternary structure, homodimer; disulfide-linked. Interacts with WFIKKN2, leading to inhibit its activity. Interacts with FSTL3. Synthesized as large precursor molecule that undergoes proteolytic cleavage to generate an N-terminal propeptide and a disulfide linked C-terminal dimer, which is the biologically active molecule. The circulating form consists of a latent complex of the C-terminal dimer and other proteins, including its propeptide, which maintain the C-terminal dimer in a latent, inactive state. Ligand activation requires additional cleavage of the prodomain by a tolloid-like metalloproteinase.

Its subcellular location is the secreted. Acts specifically as a negative regulator of skeletal muscle growth. This chain is Growth/differentiation factor 8 (MSTN), found in Bubalus bubalis (Domestic water buffalo).